A 387-amino-acid polypeptide reads, in one-letter code: Gibberellic acid methyltransferase 2 (387 aa).

Tyr-33 is a binding site for S-adenosyl-L-homocysteine. Gibberellin A4 is bound at residue Gln-40. S-adenosyl-L-homocysteine is bound by residues Cys-74, Asn-79, Asp-113, Leu-114, Ser-146, and Phe-147. 2 residues coordinate gibberellin A4: His-167 and Trp-168. Residues Asn-185, Arg-275, Asp-276, Phe-278, and Asn-279 each coordinate Mg(2+).

It belongs to the methyltransferase superfamily. Type-7 methyltransferase family. SABATH subfamily. Mg(2+) is required as a cofactor. As to expression, expressed in siliques and germinating seeds. Not detected in leaves, stems, flowers and roots.

It carries out the reaction gibberellin A4 + S-adenosyl-L-methionine = O-methyl gibberellin A4 + S-adenosyl-L-homocysteine. Its activity is regulated as follows. Down-regulated by Zn(2+), Cu(2+) and Fe(3+). No effect of K(+), NH(4+), Na(+), Ca(2+), Mg(2+), Mn(2+) and Fe(2+). Methylates the carboxyl group of several gibberellins (GAs). Substrate preference is GA4 &gt; GA34 &gt; GA9 &gt; GA3 &gt; GA1 &gt; GA51 &gt; GA20. No activity with diterpenes abietic acid and ent-kaurenoic acid. This chain is Gibberellic acid methyltransferase 2 (GAMT2), found in Arabidopsis thaliana (Mouse-ear cress).